The primary structure comprises 858 residues: Elongation factor 2 (858 aa).

A tr-type G domain is found at 17–362; it reads ANIRNMSVIA…MITIHLPSPV (346 aa). Residues 26-33, 158-161, and 216-218 contribute to the GTP site; these read AHVDHGKS, NKMD, and SGL. H715 bears the Diphthamide mark.

This sequence belongs to the TRAFAC class translation factor GTPase superfamily. Classic translation factor GTPase family. EF-G/EF-2 subfamily. Binds to 80S ribosomes. Actively translating ribosomes show mutually exclusive binding of eIF5a (EIF5A or EIF5A2) and EEF2/eEF2. Interacts with serbp1; interaction sequesters eef2/eEF2 at the A-site of the ribosome, thereby blocking the interaction sites of the mRNA-tRNA complex, promoting ribosome stabilization and hibernation. Interacts with habp4; interaction takes place at the A-site of hibernating ribosomes and promotes ribosome stabilization.

Its subcellular location is the cytoplasm. The protein resides in the nucleus. It catalyses the reaction GTP + H2O = GDP + phosphate + H(+). Catalyzes the GTP-dependent ribosomal translocation step during translation elongation. During this step, the ribosome changes from the pre-translocational (PRE) to the post-translocational (POST) state as the newly formed A-site-bound peptidyl-tRNA and P-site-bound deacylated tRNA move to the P and E sites, respectively. Catalyzes the coordinated movement of the two tRNA molecules, the mRNA and conformational changes in the ribosome. The sequence is that of Elongation factor 2 from Xenopus laevis (African clawed frog).